The sequence spans 304 residues: Acetyl-coenzyme A carboxylase carboxyl transferase subunit beta (304 aa).

The region spanning 23-292 (VWTKCDSCGQ…PNPEAPREGV (270 aa)) is the CoA carboxyltransferase N-terminal domain. Zn(2+)-binding residues include Cys27, Cys30, Cys46, and Cys49. The segment at 27–49 (CDSCGQVLYRAELERNLEVCPKC) adopts a C4-type zinc-finger fold. A disordered region spans residues 284 to 304 (NPEAPREGVVVPPVPDQEPEA). Residues 295–304 (PPVPDQEPEA) show a composition bias toward pro residues.

Belongs to the AccD/PCCB family. Acetyl-CoA carboxylase is a heterohexamer composed of biotin carboxyl carrier protein (AccB), biotin carboxylase (AccC) and two subunits each of ACCase subunit alpha (AccA) and ACCase subunit beta (AccD). The cofactor is Zn(2+).

It is found in the cytoplasm. The enzyme catalyses N(6)-carboxybiotinyl-L-lysyl-[protein] + acetyl-CoA = N(6)-biotinyl-L-lysyl-[protein] + malonyl-CoA. It functions in the pathway lipid metabolism; malonyl-CoA biosynthesis; malonyl-CoA from acetyl-CoA: step 1/1. In terms of biological role, component of the acetyl coenzyme A carboxylase (ACC) complex. Biotin carboxylase (BC) catalyzes the carboxylation of biotin on its carrier protein (BCCP) and then the CO(2) group is transferred by the transcarboxylase to acetyl-CoA to form malonyl-CoA. The sequence is that of Acetyl-coenzyme A carboxylase carboxyl transferase subunit beta from Shigella boydii serotype 4 (strain Sb227).